Consider the following 128-residue polypeptide: Small ribosomal subunit protein eS6 (128 aa).

Belongs to the eukaryotic ribosomal protein eS6 family.

This Thermoplasma volcanium (strain ATCC 51530 / DSM 4299 / JCM 9571 / NBRC 15438 / GSS1) protein is Small ribosomal subunit protein eS6.